We begin with the raw amino-acid sequence, 233 residues long: Large ribosomal subunit protein bL25 (233 aa).

Positions 1–23 (MATVRELKATARPKSGKGAARAE) are disordered.

This sequence belongs to the bacterial ribosomal protein bL25 family. CTC subfamily. Part of the 50S ribosomal subunit; part of the 5S rRNA/L5/L18/L25 subcomplex. Contacts the 5S rRNA. Binds to the 5S rRNA independently of L5 and L18.

Its function is as follows. This is one of the proteins that binds to the 5S RNA in the ribosome where it forms part of the central protuberance. This chain is Large ribosomal subunit protein bL25, found in Nitrobacter hamburgensis (strain DSM 10229 / NCIMB 13809 / X14).